We begin with the raw amino-acid sequence, 298 residues long: Protoheme IX farnesyltransferase (298 aa).

9 helical membrane passes run 26-46 (VVSL…PGVV), 52-72 (IFAT…NCLV), 99-119 (FVFL…LVNP), 120-140 (LTMW…TVIL), 148-168 (IVIG…AVTG), 174-194 (ALLL…ALAL), 219-239 (LHVL…YATQ), 241-261 (SGLI…YYAV), and 276-296 (FRYS…DHYI).

Belongs to the UbiA prenyltransferase family. Protoheme IX farnesyltransferase subfamily.

The protein resides in the cell inner membrane. The enzyme catalyses heme b + (2E,6E)-farnesyl diphosphate + H2O = Fe(II)-heme o + diphosphate. Its pathway is porphyrin-containing compound metabolism; heme O biosynthesis; heme O from protoheme: step 1/1. Its function is as follows. Converts heme B (protoheme IX) to heme O by substitution of the vinyl group on carbon 2 of heme B porphyrin ring with a hydroxyethyl farnesyl side group. The sequence is that of Protoheme IX farnesyltransferase from Nitrosospira multiformis (strain ATCC 25196 / NCIMB 11849 / C 71).